A 306-amino-acid polypeptide reads, in one-letter code: Beta-lactamase (306 aa).

Positions 1–34 (MDRTTARPNRRAVLATGVGAALAATAAAAGPAHA) form a signal peptide, tat-type signal. Residue Ser82 is the Acyl-ester intermediate of the active site. 250 to 252 (KTG) provides a ligand contact to substrate.

It belongs to the class-A beta-lactamase family. Post-translationally, predicted to be exported by the Tat system. The position of the signal peptide cleavage has not been experimentally proven.

It carries out the reaction a beta-lactam + H2O = a substituted beta-amino acid. In Streptomyces fradiae (Streptomyces roseoflavus), this protein is Beta-lactamase (blaF).